Consider the following 181-residue polypeptide: Adenylyl-sulfate kinase (181 aa).

20–27 lines the ATP pocket; sequence GLSGAGKS. Catalysis depends on serine 94, which acts as the Phosphoserine intermediate.

The protein belongs to the APS kinase family.

The catalysed reaction is adenosine 5'-phosphosulfate + ATP = 3'-phosphoadenylyl sulfate + ADP + H(+). It functions in the pathway sulfur metabolism; hydrogen sulfide biosynthesis; sulfite from sulfate: step 2/3. Catalyzes the synthesis of activated sulfate. This Deinococcus geothermalis (strain DSM 11300 / CIP 105573 / AG-3a) protein is Adenylyl-sulfate kinase.